We begin with the raw amino-acid sequence, 1612 residues long: MTGAPPYHPQSPTQQSHYAGYSPSNKPRHYYPNSEHYQQQPPQTPPAFPQPNLARSPHYSHAPSPLPGALPPLNGGAPTPAHPSDPSPQYQAHSAAGTPQYPLPRPYSGSLLPASGTSPYGPSTPSHAHPSSRPDSHAHVSPKKEPESHFAVNHGAPAYSVMREPQASPPKEAKPARAADPMSFASILSGPTEEQAPPKIQSPTPGLGTIHSAVPAANATSLNPPPASFHPKVGDIEPVPPVSAPRLEKKPSADKRQRNTEKEDLKSAENPTNGVTEPPKILRPPRRIMSEKETEMVNKYMVEIDNAEKSDVEAPGFEQERERYILKGKKRALDVERAESIRRKRRRHDYLLKLGKSFEKQANAGMDRFRYANEASVISEVQAKEIQDEKERKKDMQRKRRRENTVRMEMQKKLEAELKANETQDSAEKAKFLREAERAQRKIKTTKRALEGVTEPEEIGEITPLAPNLEGGITSSFHIGRSSPSRRKTGRGGPVTRPKKSKEQKQAEKDAAEAAYAAMENDEPLPLAPREDPRKESLKKDAKGGRSKEATPVPVSTYESKGYNQIYEQIWRDIARKDIPKVYRTKVNSLSTRQENLRKTAQLASKQSRKWQERTNKSMKDTQARAKRTMREMMSFWKRNEREERDLRRLAEKQELESAKRAEAEREANRQKRKLNFLISQTELYSHFIGRKIPGAGGESGDAGVQGTEAMDLTPGAGAKVTNFEDLDFDAEDDTALRQAAMANAQSAVQKAQERARAFDDPNKSTMDTMDDSELNFQNPTSLGDIEISQPTMLTAKLKEYQLKGLNWLVNLYEQGINGILADEMGLGKTIQSISVMAYLAEVHNIWGPFLVIAPASTLHNWQQEITKFVPNIKVLPYWGNAKDRKILRKFWDRKHITYTKESEFHVLVTSYQLVVLDAQYFQKVKWQYMILDEAQAIKSSQSSRWKSLLGFHCRNRLLLTGTPIQNNMQELWALLHFIMPTLFDSHDEFSEWFSKDIESHAQSNTKLNEDQLRRLHMILKPFMLRRVKKHVQQELGDKVEKDVFCDLTYRQRALYTNLRNRVSIMDLIEKAAVGDETDSTTLMNLVMQFRKVCNHPDLFERAETKSPFSLAHFAETASFNIKQSIEDDGAFSFLRFVDTSVGEAFNYSHQGVFERALRRRGQTNRLSRLSVVYDEDESSTATLPHTLFNIVDRNDRQAVYDIAVEGHMRELMNVSRSVFEQEGLNVIEPCAGPAASAPPITLVSSGQEALIETQDALFNVPVQHALFGTPSKAMEEQIIEQQLDPTPYSLPPMLPEPISTKGRYTHIEVPSMRRFVTDSGKLAKLDELLRELKAGGHRVLLYFQMTRMIDLMEEYLTYRNYKYCRLDGSTKLEDRRDTVADFQQRPDIFVFLLSTRAGGLGINLTAADTVIFYDSDWNPTIDSQAMDRAHRLGQTRQVTVYRLITRSTIEERIRKRALQKEEVQRVVISGGAAGGVDFNTRNRDSKTKDIAMWLADDEQAELIEQKEREALERGETFGASKGGKKNAQKRKRDVTLDDMYHEGEGNFDDASAKPSGAATPVSTAENIGTPSASTPVPKRGRGRGGKGTAKRAKTTKERLRLIDGDGGLGSG.

Disordered stretches follow at residues 1 to 288 (MTGA…PRRI), 387 to 409 (QDEK…VRME), 438 to 554 (RAQR…TPVP), and 607 to 626 (QSRK…QARA). The segment covering 10–25 (QSPTQQSHYAGYSPSN) has biased composition (polar residues). Positions 113 to 126 (PASGTSPYGPSTPS) are enriched in low complexity. 2 stretches are compositionally biased toward basic and acidic residues: residues 132 to 148 (SRPD…EPES) and 246 to 267 (RLEK…DLKS). A coiled-coil region spans residues 379–455 (SEVQAKEIQD…TKRALEGVTE (77 aa)). Composition is skewed to basic and acidic residues over residues 501 to 512 (SKEQKQAEKDAA), 529 to 549 (PRED…RSKE), and 610 to 624 (KWQE…DTQA). Residues 570-695 (IWRDIARKDI…SHFIGRKIPG (126 aa)) enclose the DBINO domain. Residues 612 to 684 (QERTNKSMKD…LNFLISQTEL (73 aa)) are a coiled coil. Residues 810–982 (VNLYEQGING…WALLHFIMPT (173 aa)) form the Helicase ATP-binding domain. ATP is bound at residue 823–830 (DEMGLGKT). The DEAQ box motif lies at 933–936 (DEAQ). Residues 1325-1485 (KLDELLRELK…GVDFNTRNRD (161 aa)) enclose the Helicase C-terminal domain. The segment at 1513-1612 (ERGETFGASK…IDGDGGLGSG (100 aa)) is disordered. Residues 1523-1533 (GGKKNAQKRKR) are compositionally biased toward basic residues. Residues 1534–1545 (DVTLDDMYHEGE) show a composition bias toward basic and acidic residues. Polar residues predominate over residues 1561–1575 (PVSTAENIGTPSAST). Basic residues predominate over residues 1579 to 1594 (KRGRGRGGKGTAKRAK). The segment covering 1595 to 1604 (TTKERLRLID) has biased composition (basic and acidic residues).

Belongs to the SNF2/RAD54 helicase family. In terms of assembly, component of the INO80 chromatin-remodeling complex.

The protein resides in the nucleus. It carries out the reaction ATP + H2O = ADP + phosphate + H(+). In terms of biological role, ATPase component of the INO80 complex which remodels chromatin by shifting nucleosomes and is involved in DNA repair. The chain is Chromatin-remodeling ATPase INO80 (ino80) from Emericella nidulans (strain FGSC A4 / ATCC 38163 / CBS 112.46 / NRRL 194 / M139) (Aspergillus nidulans).